The chain runs to 95 residues: Small ribosomal subunit protein uS17 (95 aa).

It belongs to the universal ribosomal protein uS17 family. As to quaternary structure, part of the 30S ribosomal subunit.

One of the primary rRNA binding proteins, it binds specifically to the 5'-end of 16S ribosomal RNA. The chain is Small ribosomal subunit protein uS17 from Streptomyces coelicolor (strain ATCC BAA-471 / A3(2) / M145).